Here is a 697-residue protein sequence, read N- to C-terminus: General transcription factor IIH subunit 1 (697 aa).

Low complexity predominate over residues 115 to 136; the sequence is LPVSASNGSNTTSPTNGTSPIN. Disordered stretches follow at residues 115–141 and 228–250; these read LPVS…TSPT and KNDS…ADVR. BSD domains lie at 174-231 and 255-307; these read LSKL…KNDS and TPNA…YFYR. Over residues 412-422 the composition is skewed to basic and acidic residues; the sequence is KNLKKTKKDEN. Positions 412–462 are disordered; it reads KNLKKTKKDENSTSTPTTTTTTTNTTNTTNTTTTTTTNNTTIKDPNLYNGD. The span at 423–452 shows a compositional bias: low complexity; that stretch reads STSTPTTTTTTTNTTNTTNTTTTTTTNNTT.

It belongs to the TFB1 family. As to quaternary structure, component of the 7-subunit TFIIH core complex composed of XPB/repB, XPD/repD, gtf2h1, gtf2h2, gtf2h3, gtf2h4 and gtf2h5, which is active in NER. The core complex associates with the 3-subunit CDK-activating kinase (CAK) module composed of cycH/cyclin H, cdk7 and mnat1 to form the 10-subunit holoenzyme (holo-TFIIH) active in transcription.

The protein resides in the nucleus. Functionally, component of the general transcription and DNA repair factor IIH (TFIIH) core complex, which is involved in general and transcription-coupled nucleotide excision repair (NER) of damaged DNA and, when complexed to CAK, in RNA transcription by RNA polymerase II. In NER, TFIIH acts by opening DNA around the lesion to allow the excision of the damaged oligonucleotide and its replacement by a new DNA fragment. In transcription, TFIIH has an essential role in transcription initiation. When the pre-initiation complex (PIC) has been established, TFIIH is required for promoter opening and promoter escape. Phosphorylation of the C-terminal tail (CTD) of the largest subunit of RNA polymerase II by the kinase module CAK controls the initiation of transcription. This Dictyostelium discoideum (Social amoeba) protein is General transcription factor IIH subunit 1 (gtf2h1).